Reading from the N-terminus, the 472-residue chain is Adenosylhomocysteinase (472 aa).

3 residues coordinate substrate: threonine 64, aspartate 138, and glutamate 198. An NAD(+)-binding site is contributed by 199–201 (TTT). Lysine 228 and aspartate 232 together coordinate substrate. NAD(+)-binding positions include asparagine 233, 262-267 (GFGDVG), glutamate 285, asparagine 320, 341-343 (IGH), and asparagine 386.

Belongs to the adenosylhomocysteinase family. Requires NAD(+) as cofactor.

The protein resides in the cytoplasm. It carries out the reaction S-adenosyl-L-homocysteine + H2O = L-homocysteine + adenosine. It participates in amino-acid biosynthesis; L-homocysteine biosynthesis; L-homocysteine from S-adenosyl-L-homocysteine: step 1/1. Its function is as follows. May play a key role in the regulation of the intracellular concentration of adenosylhomocysteine. This chain is Adenosylhomocysteinase, found in Prochlorococcus marinus (strain MIT 9312).